The chain runs to 240 residues: Ubiquinone biosynthesis O-methyltransferase (240 aa).

S-adenosyl-L-methionine-binding residues include R44, G64, D85, and M129.

This sequence belongs to the methyltransferase superfamily. UbiG/COQ3 family.

The enzyme catalyses a 3-demethylubiquinol + S-adenosyl-L-methionine = a ubiquinol + S-adenosyl-L-homocysteine + H(+). It catalyses the reaction a 3-(all-trans-polyprenyl)benzene-1,2-diol + S-adenosyl-L-methionine = a 2-methoxy-6-(all-trans-polyprenyl)phenol + S-adenosyl-L-homocysteine + H(+). Its pathway is cofactor biosynthesis; ubiquinone biosynthesis. Its function is as follows. O-methyltransferase that catalyzes the 2 O-methylation steps in the ubiquinone biosynthetic pathway. The protein is Ubiquinone biosynthesis O-methyltransferase of Escherichia coli O127:H6 (strain E2348/69 / EPEC).